Here is a 397-residue protein sequence, read N- to C-terminus: 1-carboxy-3-chloro-3,4-dihydroxycyclo hexa-1,5-diene dehydrogenase (397 aa).

This sequence to P.putida PHT4.

This Comamonas testosteroni (Pseudomonas testosteroni) protein is 1-carboxy-3-chloro-3,4-dihydroxycyclo hexa-1,5-diene dehydrogenase (cbaC).